Here is a 340-residue protein sequence, read N- to C-terminus: Ketol-acid reductoisomerase (NADP(+)) (340 aa).

The KARI N-terminal Rossmann domain occupies 3–182 (VQMEYEKDVK…GAARVGLLET (180 aa)). NADP(+) contacts are provided by residues 26–29 (YGSQ), Arg-49, Ser-53, and 83–86 (DEIQ). The active site involves His-108. Gly-134 is an NADP(+) binding site. One can recognise a KARI C-terminal knotted domain in the interval 183–328 (TYKEETEEDL…AELRKAMPFV (146 aa)). Residues Asp-191, Glu-195, Glu-227, and Glu-231 each contribute to the Mg(2+) site. A substrate-binding site is contributed by Ser-252.

This sequence belongs to the ketol-acid reductoisomerase family. The cofactor is Mg(2+).

It catalyses the reaction (2R)-2,3-dihydroxy-3-methylbutanoate + NADP(+) = (2S)-2-acetolactate + NADPH + H(+). It carries out the reaction (2R,3R)-2,3-dihydroxy-3-methylpentanoate + NADP(+) = (S)-2-ethyl-2-hydroxy-3-oxobutanoate + NADPH + H(+). It participates in amino-acid biosynthesis; L-isoleucine biosynthesis; L-isoleucine from 2-oxobutanoate: step 2/4. The protein operates within amino-acid biosynthesis; L-valine biosynthesis; L-valine from pyruvate: step 2/4. In terms of biological role, involved in the biosynthesis of branched-chain amino acids (BCAA). Catalyzes an alkyl-migration followed by a ketol-acid reduction of (S)-2-acetolactate (S2AL) to yield (R)-2,3-dihydroxy-isovalerate. In the isomerase reaction, S2AL is rearranged via a Mg-dependent methyl migration to produce 3-hydroxy-3-methyl-2-ketobutyrate (HMKB). In the reductase reaction, this 2-ketoacid undergoes a metal-dependent reduction by NADPH to yield (R)-2,3-dihydroxy-isovalerate. This Streptococcus pneumoniae (strain JJA) protein is Ketol-acid reductoisomerase (NADP(+)).